The following is a 74-amino-acid chain: Ubiquitin-like protein FUBI (74 aa).

Belongs to the ubiquitin family.

The protein is Ubiquitin-like protein FUBI (Fau) of Mus spicilegus (Steppe mouse).